The following is a 503-amino-acid chain: Probable DNA double-strand break repair helicase HerA (503 aa).

Residues R122, 131 to 136 (GGGKSN), and 478 to 479 (KI) contribute to the ATP site.

It belongs to the HerA family.

The enzyme catalyses Couples ATP hydrolysis with the unwinding of duplex DNA at the replication fork by translocating in the 5'-3' direction. This creates two antiparallel DNA single strands (ssDNA). The leading ssDNA polymer is the template for DNA polymerase III holoenzyme which synthesizes a continuous strand.. It carries out the reaction ATP + H2O = ADP + phosphate + H(+). It catalyses the reaction Couples ATP hydrolysis with the unwinding of duplex DNA by translocating in the 3'-5' direction.. Its function is as follows. Involved in DNA double-strand break (DSB) repair. Probably acts with NurA to stimulate resection of the 5' strand and produce the long 3' single-strand that is required for RadA loading. Has DNA-dependent ATPase activity and DNA helicase activity. The polypeptide is Probable DNA double-strand break repair helicase HerA (Methanocaldococcus jannaschii (strain ATCC 43067 / DSM 2661 / JAL-1 / JCM 10045 / NBRC 100440) (Methanococcus jannaschii)).